Consider the following 148-residue polypeptide: Phosphoribosyl-AMP cyclohydrolase (148 aa).

Mg(2+) is bound at residue aspartate 91. A Zn(2+)-binding site is contributed by cysteine 92. Mg(2+)-binding residues include aspartate 93 and aspartate 95. Cysteine 109 and cysteine 116 together coordinate Zn(2+).

Belongs to the PRA-CH family. As to quaternary structure, homodimer. It depends on Mg(2+) as a cofactor. The cofactor is Zn(2+).

Its subcellular location is the cytoplasm. The enzyme catalyses 1-(5-phospho-beta-D-ribosyl)-5'-AMP + H2O = 1-(5-phospho-beta-D-ribosyl)-5-[(5-phospho-beta-D-ribosylamino)methylideneamino]imidazole-4-carboxamide. It functions in the pathway amino-acid biosynthesis; L-histidine biosynthesis; L-histidine from 5-phospho-alpha-D-ribose 1-diphosphate: step 3/9. Functionally, catalyzes the hydrolysis of the adenine ring of phosphoribosyl-AMP. The protein is Phosphoribosyl-AMP cyclohydrolase of Rhodopseudomonas palustris (strain HaA2).